The sequence spans 884 residues: Pyruvate, phosphate dikinase (884 aa).

Residues 1 to 351 (MSTRRVYFFG…LWMLQARAGK (351 aa)) are N-terminal. R99 contacts ATP. A linker 1 region spans residues 352-408 (RTGFAMVRIAIDMCKEGMLTEEEALLRIDANKINEFLFKRFDPSVKPVVLGKGIPAS). The central stretch occupies residues 409–507 (PGAAVGVICF…KFKEGDFISI (99 aa)). At T462 the chain carries Phosphothreonine; by PDRP1. Catalysis depends on H464, which acts as the Tele-phosphohistidine intermediate. Residues 508–542 (NGTTGEIYNGAVQTIEPGITDDLQTIMDWSDKYRV) are linker 2. Residues 543 to 884 (LKIRTNADTP…IAAIKARTNQ (342 aa)) form a C-terminal region. Substrate-binding residues include R570, R626, E753, G774, T775, N776, and D777. Residue E753 participates in Mg(2+) binding. D777 provides a ligand contact to Mg(2+). Residue C839 is the Proton donor of the active site.

The protein belongs to the PEP-utilizing enzyme family. As to quaternary structure, homodimer. Mg(2+) serves as cofactor. Phosphorylation of Thr-462 in the dark inactivates the enzyme. Dephosphorylation upon light stimulation reactivates the enzyme.

It carries out the reaction pyruvate + phosphate + ATP = phosphoenolpyruvate + AMP + diphosphate + H(+). Activated by light-induced dephosphorylation. Inhibited by dark-induced phosphorylation. Both reactions are catalyzed by PDRP1. In terms of biological role, catalyzes the reversible phosphorylation of pyruvate and phosphate. The polypeptide is Pyruvate, phosphate dikinase (Giardia intestinalis (Giardia lamblia)).